Here is a 277-residue protein sequence, read N- to C-terminus: Carbonyl reductase [NADPH] 1 (277 aa).

An N-acetylserine modification is found at serine 2. Phosphoserine occurs at positions 2 and 30. Residues 10 to 34 (VTGANKGIGFVIVRDLCRRFSGDVV), 63 to 64 (DI), and asparagine 90 contribute to the NADP(+) site. Glutathione is bound by residues 95 to 97 (FKT) and glutamine 106. Serine 140 is a substrate binding site. 193–194 (AY) lines the glutathione pocket. The active-site Proton acceptor is the tyrosine 194. Residues 194-198 (YGVTK) and 231-233 (VRT) each bind NADP(+). At lysine 239 the chain carries N6-1-carboxyethyl lysine.

It belongs to the short-chain dehydrogenases/reductases (SDR) family. Monomer.

The protein resides in the cytoplasm. The catalysed reaction is a secondary alcohol + NADP(+) = a ketone + NADPH + H(+). The enzyme catalyses prostaglandin F2alpha + NADP(+) = prostaglandin E2 + NADPH + H(+). It catalyses the reaction prostaglandin E1 + NADP(+) = 15-oxoprostaglandin E1 + NADPH + H(+). It carries out the reaction menadione + NADPH + H(+) = menadiol + NADP(+). The catalysed reaction is prostaglandin D2 + NADP(+) = 15-oxoprostaglandin D2 + NADPH + H(+). The enzyme catalyses prostaglandin E2 + NADP(+) = 15-oxoprostaglandin E2 + NADPH + H(+). It catalyses the reaction prostaglandin F2alpha + NADP(+) = 15-oxoprostaglandin F2alpha + NADPH + H(+). It carries out the reaction daunorubicin + NADPH + H(+) = 13-dihydrodaunorubicin + NADP(+). The catalysed reaction is S-nitrosoglutathione + NADPH + H(+) = S-(hydroxysulfenamide)glutathione + NADP(+). The enzyme catalyses a primary alcohol + NADP(+) = an aldehyde + NADPH + H(+). It catalyses the reaction cortisol + NADPH + H(+) = 20beta-dihydrocortisol + NADP(+). It carries out the reaction corticosterone + NADPH + H(+) = 20beta-dihydrocorticosterone + NADP(+). Functionally, NADPH-dependent reductase with broad substrate specificity. Catalyzes the reduction of a wide variety of carbonyl compounds including quinones, prostaglandins, menadione, plus various xenobiotics. Catalyzes the reduction of the antitumor anthracyclines doxorubicin and daunorubicin to the cardiotoxic compounds doxorubicinol and daunorubicinol. Can convert prostaglandin E to prostaglandin F2-alpha. Can bind glutathione, which explains its higher affinity for glutathione-conjugated substrates. Catalyzes the reduction of S-nitrosoglutathione. In addition, participates in the glucocorticoid metabolism by catalyzing the NADPH-dependent cortisol/corticosterone into 20beta-dihydrocortisol (20b-DHF) or 20beta-corticosterone (20b-DHB), which are weak agonists of NR3C1 and NR3C2 in adipose tissue. This chain is Carbonyl reductase [NADPH] 1, found in Bos taurus (Bovine).